A 116-amino-acid chain; its full sequence is Large ribosomal subunit protein bL17 (116 aa).

The protein belongs to the bacterial ribosomal protein bL17 family. Part of the 50S ribosomal subunit. Contacts protein L32.

This is Large ribosomal subunit protein bL17 from Synechococcus elongatus (strain ATCC 33912 / PCC 7942 / FACHB-805) (Anacystis nidulans R2).